Consider the following 84-residue polypeptide: Small ribosomal subunit protein uS15 (84 aa).

The protein belongs to the universal ribosomal protein uS15 family. As to quaternary structure, part of the 30S ribosomal subunit. Forms a bridge to the 50S subunit in the 70S ribosome, contacting the 23S rRNA.

Functionally, one of the primary rRNA binding proteins, it binds directly to 16S rRNA where it helps nucleate assembly of the platform of the 30S subunit by binding and bridging several RNA helices of the 16S rRNA. Forms an intersubunit bridge (bridge B4) with the 23S rRNA of the 50S subunit in the ribosome. This chain is Small ribosomal subunit protein uS15, found in Akkermansia muciniphila (strain ATCC BAA-835 / DSM 22959 / JCM 33894 / BCRC 81048 / CCUG 64013 / CIP 107961 / Muc).